A 172-amino-acid chain; its full sequence is uncharacterized protein (172 aa).

Residues 1–101 are Lumenal-facing; that stretch reads MEHVSKRSIG…RYDINTRPLV (101 aa). Residues 102–122 form a helical membrane-spanning segment; the sequence is VVLAISIVFFGCLLVLKDIII. The Cytoplasmic portion of the chain corresponds to 123–145; the sequence is QSSENILSVSKWKIIGASFMGTP. A helical membrane pass occupies residues 146 to 164; the sequence is YTGLLTGLVGPLLSPFSAV. The Lumenal segment spans residues 165-172; it reads SSWLSFIF.

It localises to the endoplasmic reticulum membrane. This is an uncharacterized protein from Saccharomyces cerevisiae (strain ATCC 204508 / S288c) (Baker's yeast).